The following is a 214-amino-acid chain: Cell division protein DamX (214 aa).

Polar residues-rich tracts occupy residues 1–14 (GSGT…QPQQ) and 43–53 (QGMTGAASTLP). The disordered stretch occupies residues 1–133 (GSGTPTEAQT…SVQSAPGSHY (133 aa)). Residues 44-65 (GMTGAASTLPTAPATVMSGAAA) form a helical membrane-spanning segment. Low complexity-rich tracts occupy residues 78 to 97 (QQHK…TQHK) and 110 to 131 (SSTA…APGS). The SPOR domain maps to 127-204 (SAPGSHYTLQ…VQAKKPWVRP (78 aa)).

The protein belongs to the DamX family.

It is found in the cell inner membrane. Its function is as follows. Non-essential cell division protein. The chain is Cell division protein DamX from Serratia marcescens.